The sequence spans 184 residues: Chromophore lyase CpcS/CpeS 1 (184 aa).

Belongs to the CpcS/CpeS biliprotein lyase family.

Covalently attaches a chromophore to Cys residue(s) of phycobiliproteins. The chain is Chromophore lyase CpcS/CpeS 1 from Synechococcus sp. (strain JA-3-3Ab) (Cyanobacteria bacterium Yellowstone A-Prime).